Consider the following 246-residue polypeptide: MTFAATVLTLYPEMFPGPLGVSLAGRALREGAWAMDAVQIRDFAIDKHKTVDDTPAGGGAGMVLRVDVLAKAIDHAREAHPGCPVIAMTPRGKPLTQERVRQLADGPGVIVLCGRFEGFDERIFAGREVEEVSVGDIVLSGGECAALMLLDACIRLLPGVMGAASSGHEESFENGLLEYPHYTRPAEWEGRTIPEVLRSGDHAKIAAWRKSQSEIDTRLRRPDLWERHIGARVQSASGAQREVQDD.

Position 114 (glycine 114) interacts with S-adenosyl-L-methionine.

The protein belongs to the RNA methyltransferase TrmD family. As to quaternary structure, homodimer.

It localises to the cytoplasm. The catalysed reaction is guanosine(37) in tRNA + S-adenosyl-L-methionine = N(1)-methylguanosine(37) in tRNA + S-adenosyl-L-homocysteine + H(+). Specifically methylates guanosine-37 in various tRNAs. The chain is tRNA (guanine-N(1)-)-methyltransferase from Novosphingobium aromaticivorans (strain ATCC 700278 / DSM 12444 / CCUG 56034 / CIP 105152 / NBRC 16084 / F199).